The following is a 285-amino-acid chain: MLRAYIFYRLVKNTLLTAFILSLILLTLQLTRLSNVLFGIPFKDFMGFLVVWNAYYTYFFIPEGVILSTFFLMKHFKDKKLLHVFYSFRISDFRIFLYCSIPFLTFFLISALLSNTLLEEKVAFTRKNMLFKLQEKFFSEVPAGTFVSFGAVVLHAEKREGNTLKEAFFKFGDITVLSEYLKYKGNGVFEFRRGTVITEEENYFVVKFNEYTLNLKQFQKKKLREKRLKESKVVNYVNVATLPLFFFLSFTVALKFCHGGLSYYAFASLFIVVHQLIIFVVKLML.

6 helical membrane-spanning segments follow: residues phenylalanine 7–glutamine 29, leucine 49–phenylalanine 71, isoleucine 95–leucine 117, phenylalanine 137–alanine 156, lysine 232–leucine 254, and glycine 259–valine 281.

It localises to the cell membrane. This is an uncharacterized protein from Aquifex aeolicus (strain VF5).